The primary structure comprises 544 residues: Lipid II flippase MurJ (544 aa).

14 helical membrane-spanning segments follow: residues 21 to 41, 49 to 69, 90 to 110, 127 to 147, 169 to 189, 191 to 211, 241 to 261, 297 to 317, 338 to 358, 375 to 395, 404 to 424, 431 to 451, 471 to 491, and 500 to 520; these read ILGM…GGAL, YTLF…KFVS, VMLV…PMFA, VVYV…MSLV, IVRI…FNGG, VIAV…GLVV, MFFE…AIPL, LVMI…PTIT, TILF…GPTY, ILLW…NAAI, FAVV…VPLI, GAIL…FIMI, VLSA…GFFI, and AAIV…YCGY.

Belongs to the polysaccharide synthase family.

It is found in the cell membrane. Its pathway is cell wall biogenesis; peptidoglycan biosynthesis. Its function is as follows. Involved in peptidoglycan biosynthesis. Transports lipid-linked peptidoglycan precursors from the inner to the outer leaflet of the cytoplasmic membrane. Not essential for growth. The chain is Lipid II flippase MurJ from Bacillus subtilis (strain 168).